The chain runs to 311 residues: Aspartate carbamoyltransferase catalytic subunit (311 aa).

Carbamoyl phosphate-binding residues include Arg55 and Thr56. Lys85 contacts L-aspartate. Positions 106, 135, and 138 each coordinate carbamoyl phosphate. The L-aspartate site is built by Arg168 and Arg230. Positions 268 and 269 each coordinate carbamoyl phosphate.

Belongs to the aspartate/ornithine carbamoyltransferase superfamily. ATCase family. As to quaternary structure, heterododecamer (2C3:3R2) of six catalytic PyrB chains organized as two trimers (C3), and six regulatory PyrI chains organized as three dimers (R2).

It carries out the reaction carbamoyl phosphate + L-aspartate = N-carbamoyl-L-aspartate + phosphate + H(+). The protein operates within pyrimidine metabolism; UMP biosynthesis via de novo pathway; (S)-dihydroorotate from bicarbonate: step 2/3. Its function is as follows. Catalyzes the condensation of carbamoyl phosphate and aspartate to form carbamoyl aspartate and inorganic phosphate, the committed step in the de novo pyrimidine nucleotide biosynthesis pathway. This is Aspartate carbamoyltransferase catalytic subunit from Serratia proteamaculans (strain 568).